A 150-amino-acid polypeptide reads, in one-letter code: Small ribosomal subunit protein uS19y (150 aa).

Belongs to the universal ribosomal protein uS19 family.

Its subcellular location is the cytoplasm. The sequence is that of Small ribosomal subunit protein uS19y (RPS15C) from Arabidopsis thaliana (Mouse-ear cress).